The chain runs to 506 residues: Probable cytosol aminopeptidase (506 aa).

Positions 270 and 275 each coordinate Mn(2+). The active site involves K282. Residues D293, D352, and E354 each coordinate Mn(2+). Residue R356 is part of the active site.

The protein belongs to the peptidase M17 family. Mn(2+) is required as a cofactor.

Its subcellular location is the cytoplasm. It carries out the reaction Release of an N-terminal amino acid, Xaa-|-Yaa-, in which Xaa is preferably Leu, but may be other amino acids including Pro although not Arg or Lys, and Yaa may be Pro. Amino acid amides and methyl esters are also readily hydrolyzed, but rates on arylamides are exceedingly low.. It catalyses the reaction Release of an N-terminal amino acid, preferentially leucine, but not glutamic or aspartic acids.. Presumably involved in the processing and regular turnover of intracellular proteins. Catalyzes the removal of unsubstituted N-terminal amino acids from various peptides. This chain is Probable cytosol aminopeptidase, found in Photorhabdus laumondii subsp. laumondii (strain DSM 15139 / CIP 105565 / TT01) (Photorhabdus luminescens subsp. laumondii).